The primary structure comprises 35 residues: Antimicrobial peptide 3 (35 aa).

Residues 4–35 (GGECGGRFGGCAGGQCCSRFGFCGSGPKYCAH) form the Chitin-binding type-1 domain. 3 cysteine pairs are disulfide-bonded: C7/C20, C14/C26, and C19/C33.

In terms of processing, contains 3 disulfide bonds. In terms of tissue distribution, expressed in leaf, flower, stem and seed with highest expression in leaf (at protein level).

Has antifungal activity against A.niger (IC(50)=5.4 uM), B.sorokiniana (IC(50)=2.0 uM), B.cinerea (IC(50)=1.6 uM), F.solani (IC(50)=3.7 uM) and A.alternata (IC(50)=5.0 uM). Binds chitin in vitro. Has no antibacterial activity at concentrations up to 10 uM. This is Antimicrobial peptide 3 from Stellaria media (Common chickweed).